The primary structure comprises 559 residues: Glucans biosynthesis protein G (559 aa).

The first 37 residues, 1 to 37, serve as a signal peptide directing secretion; it reads MVSLLSCGTSASSHIVKKALTRLSLAMAAGLCFNLAA.

The protein belongs to the OpgD/OpgG family.

Its subcellular location is the periplasm. It functions in the pathway glycan metabolism; osmoregulated periplasmic glucan (OPG) biosynthesis. In terms of biological role, involved in the biosynthesis of osmoregulated periplasmic glucans (OPGs). The polypeptide is Glucans biosynthesis protein G (Shewanella frigidimarina (strain NCIMB 400)).